A 753-amino-acid polypeptide reads, in one-letter code: Photosystem I P700 chlorophyll a apoprotein A1 (753 aa).

8 helical membrane passes run 73–96 (IFSAHFGHLSIIFVWISGMIFHAA), 159–182 (LYSAAIGALVAAVVMMYAGYYHYH), 198–222 (MTHHLIVLLGLGNLAWTGHLIHVSL), 294–312 (IAHHHLALAVMYIIAGHMY), 349–372 (WHAQLAINLATWGSFSIIVAHHMY), 388–414 (LNLFVHHMWIGGFLIVGGAAHAAIFMV), 436–458 (TIISHLNWVCIFLGFHSFGLYIH), and 534–552 (FMIHHIHAFQIHVTVLILI). The [4Fe-4S] cluster site is built by C576 and C585. The next 2 helical transmembrane spans lie at 592-613 (HIFLGLFWMYNCISIVNFHFFW) and 667-689 (LSAYGILFLGAHFIWAFSLMFLF). H678 is a binding site for chlorophyll a'. Chlorophyll a contacts are provided by M686 and Y694. W695 is a binding site for phylloquinone. The chain crosses the membrane as a helical span at residues 727-747 (AVGLGHYLLGGIVTSWSFYLA).

This sequence belongs to the PsaA/PsaB family. As to quaternary structure, the PsaA/B heterodimer binds the P700 chlorophyll special pair and subsequent electron acceptors. PSI consists of a core antenna complex that captures photons, and an electron transfer chain that converts photonic excitation into a charge separation. The cyanobacterial PSI reaction center is composed of one copy each of PsaA,B,C,D,E,F,I,J,K,L,M and X, and forms trimeric complexes. The cofactor is PSI electron transfer chain: 5 chlorophyll a, 1 chlorophyll a', 2 phylloquinones and 3 4Fe-4S clusters. PSI core antenna: 90 chlorophyll a, 22 carotenoids, 3 phospholipids and 1 galactolipid. P700 is a chlorophyll a/chlorophyll a' dimer, A0 is one or more chlorophyll a, A1 is one or both phylloquinones and FX is a shared 4Fe-4S iron-sulfur center..

Its subcellular location is the cellular thylakoid membrane. The catalysed reaction is reduced [plastocyanin] + hnu + oxidized [2Fe-2S]-[ferredoxin] = oxidized [plastocyanin] + reduced [2Fe-2S]-[ferredoxin]. PsaA and PsaB bind P700, the primary electron donor of photosystem I (PSI), as well as the electron acceptors A0, A1 and FX. PSI is a plastocyanin/cytochrome c6-ferredoxin oxidoreductase, converting photonic excitation into a charge separation, which transfers an electron from the donor P700 chlorophyll pair to the spectroscopically characterized acceptors A0, A1, FX, FA and FB in turn. Oxidized P700 is reduced on the lumenal side of the thylakoid membrane by plastocyanin or cytochrome c6. The sequence is that of Photosystem I P700 chlorophyll a apoprotein A1 from Acaryochloris marina (strain MBIC 11017).